Reading from the N-terminus, the 317-residue chain is tRNA dimethylallyltransferase (317 aa).

Position 14-21 (14-21 (GPTASGKS)) interacts with ATP. 16–21 (TASGKS) lines the substrate pocket. Interaction with substrate tRNA stretches follow at residues 39–42 (DSVL) and 163–167 (QRIQR).

It belongs to the IPP transferase family. In terms of assembly, monomer. Mg(2+) serves as cofactor.

It catalyses the reaction adenosine(37) in tRNA + dimethylallyl diphosphate = N(6)-dimethylallyladenosine(37) in tRNA + diphosphate. Catalyzes the transfer of a dimethylallyl group onto the adenine at position 37 in tRNAs that read codons beginning with uridine, leading to the formation of N6-(dimethylallyl)adenosine (i(6)A). The sequence is that of tRNA dimethylallyltransferase from Xylella fastidiosa (strain M12).